Reading from the N-terminus, the 491-residue chain is Cyclin-A1-3 (491 aa).

A compositionally biased stretch (low complexity) spans 1-21; the sequence is MSSSLASRRSSSSSAAKRPAA. 2 disordered regions span residues 1–32 and 69–106; these read MSSS…AAGA and SLAS…QKES. Positions 75-91 are enriched in polar residues; it reads NVGTNRVSAVKSASTKP.

This sequence belongs to the cyclin family. Cyclin AB subfamily.

This chain is Cyclin-A1-3 (CYCA1-3), found in Oryza sativa subsp. japonica (Rice).